The chain runs to 448 residues: MPRKYFGTDGIRGTANTGHMTAETALRVGMAAGRVFRRGEHRHRVVIGKDTRLSGYMLEPALTAGFTSMGMDVFLFGPLPTPAVAMLTRSLRADLGVMISASHNSFEDNGIKLFGPDGFKLSDEVELAIEHHMDNGLADNLAGSRGLGRAKRIEDAQARYIEHVKHTFPKQQTLEGLRIVIDCANGAAYKVAPEVLWELGAEVVTVGTEPNGFNINEDCGSTAPERMCAAVLERRADIGIALDGDADRVIIADERGKVIDGDQIMGLVARHWKEMGTLSAPGIVATVMSNLGLERYLGSLGLDLVRTQVGDRYVVEHMREHGYNVGGEQSGHIVLKDFSTTGDGLIAALQVLAVLKAGDKPVSEICHLFDPLPQLLKNIRFKRGEPLKDKDVQEAIREGESRLGKTGRLVIRKSGTEPLIRVMGEGDDEKLVTSVVNDIAAVIEHNAA.

The active-site Phosphoserine intermediate is the Ser102. The Mg(2+) site is built by Ser102, Asp243, Asp245, and Asp247. Ser102 is subject to Phosphoserine.

The protein belongs to the phosphohexose mutase family. The cofactor is Mg(2+). In terms of processing, activated by phosphorylation.

It carries out the reaction alpha-D-glucosamine 1-phosphate = D-glucosamine 6-phosphate. Its function is as follows. Catalyzes the conversion of glucosamine-6-phosphate to glucosamine-1-phosphate. The protein is Phosphoglucosamine mutase of Parvibaculum lavamentivorans (strain DS-1 / DSM 13023 / NCIMB 13966).